A 411-amino-acid polypeptide reads, in one-letter code: Actin-like protein 9 (411 aa).

The span at 1–15 (MDVNGPKRWEPHRSL) shows a compositional bias: basic and acidic residues. A disordered region spans residues 1-23 (MDVNGPKRWEPHRSLDLNPRSTP).

It belongs to the actin family. In terms of assembly, interacts with ACTL7A.

The protein localises to the cytoplasmic vesicle. It is found in the secretory vesicle. Its subcellular location is the acrosome. The protein resides in the cytoplasm. It localises to the cytoskeleton. The protein localises to the perinuclear theca. Functionally, testis-specic protein that plays an important role in fusion of proacrosomal vesicles and perinuclear theca formation. In Rattus norvegicus (Rat), this protein is Actin-like protein 9 (Actl9).